The sequence spans 1830 residues: Guanine nucleotide exchange factor SPIKE 1 (1830 aa).

An N-acetylmethionine modification is found at methionine 1. The disordered stretch occupies residues 285–304 (NTGESASPSSPLAPSMTASS). Residues 289–304 (SASPSSPLAPSMTASS) are compositionally biased toward low complexity. A C2 DOCK-type domain is found at 463–622 (FHCLYVYPVA…NIFKLRLRLC (160 aa)). Serine 1051 bears the Phosphoserine mark. Threonine 1079 is subject to Phosphothreonine. At serine 1095 the chain carries Phosphoserine. The region spanning 1379 to 1828 (MAFAPVPDLH…LSHYIPAILS (450 aa)) is the DOCKER domain.

This sequence belongs to the DOCK family. As to quaternary structure, homodimer. Component of SCAR/WAVE and ARP2/3 complexes. Interacts directly with ARAC4/ROP2, ARAC1/ROP3, ARAC5/ROP4, ARAC6/ROP5, ARAC8/ROP10, ARAC9/ROP8, SCAR1, SCAR2, SCAR3, SCAR4, ABI1, ABI2, ABI3 and ABI4. Binds to the inactive GDP-bound form of ARAC3/ROP6. Expressed ubiquitously, in roots and aerial organs.

The protein localises to the cytoplasm. Its subcellular location is the endoplasmic reticulum membrane. The protein resides in the nucleus. Guanine nucleotide exchange factor (GEF) for Rho and Rac. GEF proteins activate small GTPases by exchanging bound GDP for free GTP. Controls actin polymerization via the two heteromeric complexes WAVE and actin-related protein (ARP) 2/3. Involved in cytoskeletal reorganization required for cell shape (e.g. trichome and cotyledon) control and tissue development. Prevents cortical microtubules organization into parallel arrays oriented perpendicular to the axis of cell elongation to limit anisotropic cell growth during petal development, probably by triggering ARAC4/ROP2 and ARAC3/ROP6 activity. Promotes polarized growth and cell-cell adhesion in the leaf epidermis probably by promoting the formation of endoplasmic reticulum (ER) exit site (ERES) and/or trafficking between the ER and Golgi. Triggers ARAC3/ROP6 activation required for auxin-mediated inhibition of PIN2 internalization during gravitropic responses (, PubMed:22683260). The chain is Guanine nucleotide exchange factor SPIKE 1 from Arabidopsis thaliana (Mouse-ear cress).